A 354-amino-acid polypeptide reads, in one-letter code: Protein angel (354 aa).

Residues 22–59 (VSSQAKGASGKRKQKAKEMESSHDRNRRWTSLGNQAEG) are disordered.

Belongs to the CCR4/nocturin family. In terms of tissue distribution, ubiquitously expressed in embryos.

This is Protein angel (angel) from Drosophila melanogaster (Fruit fly).